A 266-amino-acid chain; its full sequence is Tryptophan synthase alpha chain (266 aa).

Residues glutamate 47 and aspartate 58 each act as proton acceptor in the active site.

This sequence belongs to the TrpA family. As to quaternary structure, tetramer of two alpha and two beta chains.

The catalysed reaction is (1S,2R)-1-C-(indol-3-yl)glycerol 3-phosphate + L-serine = D-glyceraldehyde 3-phosphate + L-tryptophan + H2O. Its pathway is amino-acid biosynthesis; L-tryptophan biosynthesis; L-tryptophan from chorismate: step 5/5. In terms of biological role, the alpha subunit is responsible for the aldol cleavage of indoleglycerol phosphate to indole and glyceraldehyde 3-phosphate. The sequence is that of Tryptophan synthase alpha chain from Leptospira biflexa serovar Patoc (strain Patoc 1 / Ames).